The chain runs to 324 residues: MNSSRVVFPANFSYEDPLPFECNEDPNVVLSLAMYGMQSSYLIVGAVLNVMIVYTVFHGNSYRDNSFYMLYCADAIVGIYINTAEVIFGRIFIYITPLCPIASPYFFTPSILTKMYYAALHYSLGFKTFSQIFMSFNRMTCVIFLMKHLKLWKQILKPVLIITFILPLGVIWKILLSRVYINPNGAGFSVNYKDYFPWANISILHLFHFTLCFVLVIIFFVATILGLTMLKQRIKSAERSLTIVTMIMAVQTVTFASIQIYFVFFAAYTPKIRSVLLQIVSFVFDSLYVFSPIALIVMSRQLRKDIFNLKDKETQISMYPNSEL.

8 helical membrane passes run 39 to 59 (SSYLIVGAVLNVMIVYTVFHG), 69 to 89 (MLYCADAIVGIYINTAEVIFG), 91 to 111 (IFIYITPLCPIASPYFFTPSI), 128 to 146 (TFSQIFMSFNRMTCVIFLM), 155 to 175 (ILKPVLIITFILPLGVIWKIL), 206 to 226 (LFHFTLCFVLVIIFFVATILG), 246 to 266 (MIMAVQTVTFASIQIYFVFFA), and 279 to 299 (IVSFVFDSLYVFSPIALIVMS).

It belongs to the nematode receptor-like protein srg family.

Its subcellular location is the membrane. This is Serpentine receptor class gamma-10 (srg-10) from Caenorhabditis elegans.